The primary structure comprises 235 residues: Large ribosomal subunit protein uL3 (235 aa).

Residues serine 138 to phenylalanine 157 are disordered. N5-methylglutamine is present on glutamine 151.

This sequence belongs to the universal ribosomal protein uL3 family. In terms of assembly, part of the 50S ribosomal subunit. Forms a cluster with proteins L14 and L19. In terms of processing, methylated by PrmB.

In terms of biological role, one of the primary rRNA binding proteins, it binds directly near the 3'-end of the 23S rRNA, where it nucleates assembly of the 50S subunit. The sequence is that of Large ribosomal subunit protein uL3 from Rhodospirillum centenum (strain ATCC 51521 / SW).